Consider the following 127-residue polypeptide: Large ribosomal subunit protein uL22c (127 aa).

This sequence belongs to the universal ribosomal protein uL22 family. Part of the 50S ribosomal subunit.

Its subcellular location is the plastid. The protein localises to the chloroplast. Its function is as follows. This protein binds specifically to 23S rRNA. The globular domain of the protein is located near the polypeptide exit tunnel on the outside of the subunit, while an extended beta-hairpin is found that lines the wall of the exit tunnel in the center of the 70S ribosome. In Acorus calamus var. americanus (American sweet flag), this protein is Large ribosomal subunit protein uL22c (rpl22).